Reading from the N-terminus, the 215-residue chain is Nascent polypeptide-associated complex subunit alpha (215 aa).

Residues 1–81 form a disordered region; that stretch reads MPGEATETVP…SEKKARKAMS (81 aa). The span at 9-28 shows a compositional bias: polar residues; sequence VPATEQELPQPQAETGSGTE. Residues 29 to 42 show a composition bias toward acidic residues; sequence SDSDESVPELEEQD. Ser-43 is subject to Phosphoserine; by ILK1. Low complexity predominate over residues 44-57; the sequence is TQTATQQAQLAAAA. The required for DNA-binding stretch occupies residues 69–80; it reads QSRSEKKARKAM. Residues 70–135 form the NAC-A/B domain; that stretch reads SRSEKKARKA…AKIEDLSQQA (66 aa). Residues 93–108 form an RNA/DNA-binding region; sequence RVTIRKSKNILFVITK. Ser-132 bears the Phosphoserine mark. N6-acetyllysine; alternate is present on Lys-142. Lys-142 is covalently cross-linked (Glycyl lysine isopeptide (Lys-Gly) (interchain with G-Cter in SUMO2); alternate). Thr-159 is modified (phosphothreonine; by GSK3-beta). Thr-161 is subject to Phosphothreonine. 4 positions are modified to phosphoserine: Ser-166, Ser-186, Ser-191, and Ser-203. One can recognise a UBA domain in the interval 176 to 213; that stretch reads VEVKDIELVMSQANVSRAKAVRALKNNSNDIVNAIMEL.

This sequence belongs to the NAC-alpha family. Part of the nascent polypeptide-associated complex (NAC), which is a heterodimer of NACA and BTF3 (via NAC-A/B domains). NAC associates with ribosomes through the BTF3/NACB subunit and contacts the ribosomal protein L23, which is positioned near the exiting site. Both subunits can contact nascent polypeptide chains. NACA may also form homodimers, and only this form binds DNA. Interacts with TBP and JUN. Phosphorylation of Ser-43 by ILK during cell adhesion may promote nuclear localization. Phosphorylation of Thr-159 by GSK3B may promote proteasome mediated degradation. Isoform 1 appears to be ubiquitously expressed.

The protein resides in the cytoplasm. Its subcellular location is the nucleus. Functionally, prevents inappropriate targeting of non-secretory polypeptides to the endoplasmic reticulum (ER). Binds to nascent polypeptide chains as they emerge from the ribosome and blocks their interaction with the signal recognition particle (SRP), which normally targets nascent secretory peptides to the ER. Also reduces the inherent affinity of ribosomes for protein translocation sites in the ER membrane (M sites). Isoform 1 and isoform 2 appear to bind DNA and play roles in transcription. Isoform 1 may function as a specific coactivator for JUN, acting to stabilize the interaction of JUN homodimers with promoter elements. This is Nascent polypeptide-associated complex subunit alpha (Naca) from Mus musculus (Mouse).